The sequence spans 301 residues: Phomoidride biosynthesis cluster protein F (301 aa).

Part of the gene cluster that mediates the biosynthesis of the antihypercholesterolemic agents phomoidrides which are dimeric anhydrides. The function of phiF within the pathway has still to be determined. The pathway begins with the highly reducing polyketide synthase phiA that catalyzes the formation of a C12-fatty acyl-ACP, starting from one acetate and 5 malonate units. The hydrolase phiM is involved in the release of the C12-fatty acyl chain from phiA. The alkylcitrate synthase (ACS) phiJ and the alkylcitrate dehydratase (ACDH) phiI then give rise to decarboxylated monomeric anhydrides by coupling the C12-fatty acyl chain with oxalacetic acid. The cyclase phiC is responsible for the dimerization of the monomeric anhydrides which leads to the production of prephomoidride that contains the characteristic bicyclo[4.3.1]deca-1,6-diene system of phomoidrides. Iterative oxidation catalyzed by the alpha-ketoglutarate-dependent dioxygenase phiK produced then phomoidride A. Finally, the methyltransferase phiE converts phomoidride A to phomoidride B via an acetalization reaction. The phosphatidylethanolamine-binding protein phiB and phiN are not essential for dimerization and their functions have still to be determined. The sequence is that of Phomoidride biosynthesis cluster protein F from Fungal sp. (strain ATCC 74256).